A 201-amino-acid polypeptide reads, in one-letter code: RILP-like protein 2 (201 aa).

One can recognise an RH1 domain in the interval 14 to 108 (GPEIALDKDP…LKDGPQMGVG (95 aa)). Residues 67–155 (LEMLEALVNQ…AQDELQCYKS (89 aa)) are a coiled coil. Residues 121–197 (RPRFTLQELR…TVKSLFSFKQ (77 aa)) enclose the RH2 domain. The disordered stretch occupies residues 177–201 (SPRENESKEKSTVKSLFSFKQGKQT). Residues 179–188 (RENESKEKST) show a composition bias toward basic and acidic residues.

Belongs to the RILPL family.

It is found in the cytoplasm. It localises to the cytosol. The protein localises to the cytoskeleton. The protein resides in the microtubule organizing center. Its subcellular location is the centrosome. It is found in the cell projection. It localises to the cilium. Involved in cell shape and neuronal morphogenesis, positively regulating the establishment and maintenance of dendritic spines. Plays a role in cellular protein transport. The polypeptide is RILP-like protein 2 (rilpl2) (Xenopus tropicalis (Western clawed frog)).